The primary structure comprises 244 residues: Phosphate propanoyltransferase (244 aa).

A CoA-binding site is contributed by 52 to 54; it reads ISA. The Zn(2+) site is built by His-56 and His-58. Arg-106 lines the CoA pocket. Arg-112 provides a ligand contact to phosphate. Residues Glu-118, His-166, His-168, and His-214 each contribute to the Zn(2+) site. Asn-221 is a CoA binding site.

Belongs to the PduL family. As to quaternary structure, full-length protein forms large oligomers. Possible homotrimer and monomer, when purified in the absence of the encapsulation peptide (EP, residues 1-20). The EP may influence oligomerization. The cofactor is Zn(2+).

Its subcellular location is the bacterial microcompartment. The enzyme catalyses propanoyl-CoA + phosphate = propanoyl phosphate + CoA. Functionally, part of a bacterial microcompartment (BMC) locus required for growth on plant and algal sugars, including L-fucose and L-rhamnose. Thought to be active on lactyl-CoA in a lactaldehyde-degradation pathway. CoA is regenerated within the BMC via this enzyme, although there must also be cofactor transport across the BMC. Directly targeted to the BMC. This is Phosphate propanoyltransferase from Planctopirus limnophila (strain ATCC 43296 / DSM 3776 / IFAM 1008 / Mu 290) (Planctomyces limnophilus).